Consider the following 943-residue polypeptide: WD repeat-containing protein 3 (943 aa).

WD repeat units follow at residues 21–60, 63–102, 105–144, 147–186, and 189–228; these read SQKG…KILI, GLKQ…GNVT, GHKA…GLYR, GHKD…CFKT, and GHRT…EIED. Residues Ser-240 and Ser-241 each carry the phosphoserine modification. Thr-257 is subject to Phosphothreonine. One copy of the WD 6 repeat lies at 277–316; sequence EGRDRVVNLAVDKTGRILACHGTDSVLELFCILSKKEIQK. The segment at 326–345 is disordered; it reads RKKAKLHSSKGEEEDPEVNV. WD repeat units follow at residues 413 to 451, 453 to 493, 494 to 533, 547 to 586, 589 to 630, 631 to 670, and 673 to 712; these read GHRS…CIRT, TCEY…ETID, AHDG…DENS, QLDE…FFLS, GHKL…KSLF, AHDD…HIQT, and GHHQ…LILE. Glycyl lysine isopeptide (Lys-Gly) (interchain with G-Cter in SUMO2) cross-links involve residues Lys-474 and Lys-529. Ser-726 is modified (phosphoserine).

Belongs to the WD repeat WDR3/UTP12 family. As to quaternary structure, part of the small subunit (SSU) processome, composed of more than 70 proteins and the RNA chaperone small nucleolar RNA (snoRNA) U3. Ubiquitous.

It localises to the nucleus. It is found in the nucleolus. Its function is as follows. Part of the small subunit (SSU) processome, first precursor of the small eukaryotic ribosomal subunit. During the assembly of the SSU processome in the nucleolus, many ribosome biogenesis factors, an RNA chaperone and ribosomal proteins associate with the nascent pre-rRNA and work in concert to generate RNA folding, modifications, rearrangements and cleavage as well as targeted degradation of pre-ribosomal RNA by the RNA exosome. This Homo sapiens (Human) protein is WD repeat-containing protein 3.